The chain runs to 937 residues: Chaperone protein ClpD2, chloroplastic (937 aa).

A chloroplast-targeting transit peptide spans 1–80 (MEACCCSSSS…FERFTERAVK (80 aa)). 2 repeat regions span residues 81–137 (AVVF…VGKE) and 152–217 (FSGA…VQGE). A Clp R domain is found at 81 to 217 (AVVFSQREAR…KQALTRVQGE (137 aa)). Residues 259–513 (LALFCLDLTM…RMESFKRKKE (255 aa)) are i. ATP-binding positions include 304-311 (GEAGVGKT) and 658-665 (GPTGVGKT). The interval 584–775 (VGSEEIARVT…LIVMTSNVGS (192 aa)) is II.

It belongs to the ClpA/ClpB family. ClpD subfamily. In terms of tissue distribution, highly expressed in stems, culms and leaves.

It is found in the plastid. It localises to the chloroplast. Its function is as follows. Molecular chaperone that may interact with a ClpP-like protease involved in degradation of denatured proteins in the chloroplast. The protein is Chaperone protein ClpD2, chloroplastic (CLPD2) of Oryza sativa subsp. japonica (Rice).